A 1017-amino-acid polypeptide reads, in one-letter code: DNA polymerase (1017 aa).

Belongs to the DNA polymerase type-B family. In terms of assembly, heterodimer with the terminal protein; this heterodimer binds to bp 9 to 18 of the genome. Forms a complex with viral pTP, DBP and hosts NFIA and POU2F1/OCT1 for initiation of replication.

The protein resides in the host nucleus. It catalyses the reaction DNA(n) + a 2'-deoxyribonucleoside 5'-triphosphate = DNA(n+1) + diphosphate. Its function is as follows. Eukaryotic-type DNA polymerase involved in viral genomic replication. DNA synthesis is protein primed, and acts in a strand displacement replication. Assembles in complex with viral pTP, DBP, host NFIA and host POU2F1/OCT1 on viral origin of replication. The polymerase covalently transfers dCMP onto pTP, thereby initiating complementary strand synthesis. This chain is DNA polymerase, found in Bovine adenovirus 2 (BAdV-2).